A 108-amino-acid chain; its full sequence is uncharacterized protein (108 aa).

A helical transmembrane segment spans residues 15-37; it reads SYYFYIFWNFFLPMFIVYRGFGL.

The protein resides in the membrane. This is an uncharacterized protein from Archaeoglobus fulgidus (strain ATCC 49558 / DSM 4304 / JCM 9628 / NBRC 100126 / VC-16).